Here is a 513-residue protein sequence, read N- to C-terminus: V-type proton ATPase subunit B, kidney isoform (513 aa).

Position 394 (R394) interacts with ATP. The PDZ-binding signature appears at 510–513 (DTAL).

The protein belongs to the ATPase alpha/beta chains family. In terms of assembly, V-ATPase is a heteromultimeric enzyme made up of two complexes: the ATP-hydrolytic V1 complex and the proton translocation V0 complex. The V1 complex consists of three catalytic AB heterodimers that form a heterohexamer, three peripheral stalks each consisting of EG heterodimers, one central rotor including subunits D and F, and the regulatory subunits C and H. The proton translocation complex V0 consists of the proton transport subunit a, a ring of proteolipid subunits c9c'', rotary subunit d, subunits e and f, and the accessory subunits ATP6AP1/Ac45 and ATP6AP2/PRR. Forms a complex with NHERF1 and SCL4A7. As to expression, kidney cortex and medulla.

The protein localises to the apical cell membrane. The protein resides in the basolateral cell membrane. In terms of biological role, non-catalytic subunit of the V1 complex of vacuolar(H+)-ATPase (V-ATPase), a multisubunit enzyme composed of a peripheral complex (V1) that hydrolyzes ATP and a membrane integral complex (V0) that translocates protons. V-ATPase is responsible for acidifying and maintaining the pH of intracellular compartments and in some cell types, is targeted to the plasma membrane, where it is responsible for acidifying the extracellular environment. Essential for the proper assembly and activity of V-ATPase. In renal intercalated cells, mediates secretion of protons (H+) into the urine thereby ensuring correct urinary acidification. Required for optimal olfactory function by mediating the acidification of the nasal olfactory epithelium. In Bos taurus (Bovine), this protein is V-type proton ATPase subunit B, kidney isoform (ATP6V1B1).